We begin with the raw amino-acid sequence, 262 residues long: Rhomboid-type serine protease 2 (262 aa).

Residues 1–16 are Cytoplasmic-facing; the sequence is MNWKSYVFPGGHPPAA. A helical membrane pass occupies residues 17-37; it reads LTTGLVVFLTAIYLLSFIFAL. The Lumenal portion of the chain corresponds to 38–57; it reads REDLSLAPESLFKLQMSRLS. The helical transmembrane segment at 58-78 threads the bilayer; sequence LYPLIHLSLPHLLFNVLAIWA. Topologically, residues 79-89 are cytoplasmic; it reads PLNLFEETHGT. A helical membrane pass occupies residues 90-110; the sequence is VYTGVFLNLSALFAGILYCLL. Over 111-112 the chain is Lumenal; that stretch reads GK. The chain crosses the membrane as a helical span at residues 113–133; the sequence is LLYPEALVAGASGWCFTLFAY. The Nucleophile role is filled by Ser124. Residues 134–151 are Cytoplasmic-facing; it reads YSFKESQIRPRTRIFRTD. A helical membrane pass occupies residues 152 to 168; sequence YSIPTLYTPLVLLVAIA. The Lumenal portion of the chain corresponds to 169–174; that stretch reads VVIPGS. A helical transmembrane segment spans residues 175-191; that stretch reads SFWGHFFGLCVGYAIGY. The active site involves His179. The Cytoplasmic portion of the chain corresponds to 192-262; the sequence is KESWFNKITP…DNSGTVLGTA (71 aa). A disordered region spans residues 243–262; that stretch reads STETPLPLHNDNSGTVLGTA. Positions 252 to 262 are enriched in polar residues; it reads NDNSGTVLGTA.

It belongs to the peptidase S54 family. Interacts with SNX3.

It is found in the golgi apparatus membrane. The protein resides in the golgi apparatus. Its subcellular location is the cis-Golgi network membrane. It carries out the reaction Cleaves type-1 transmembrane domains using a catalytic dyad composed of serine and histidine that are contributed by different transmembrane domains.. Probable rhomboid-type serine protease that catalyzes intramembrane proteolysis. The chain is Rhomboid-type serine protease 2 (RBD2) from Saccharomyces cerevisiae (strain ATCC 204508 / S288c) (Baker's yeast).